Here is a 1200-residue protein sequence, read N- to C-terminus: SR-related and CTD-associated factor 4 (1200 aa).

The CID domain occupies 1–139 (MDAVNAFNQE…PLLDMAAGTS (139 aa)). Lys-49 carries the N6-acetyllysine modification. A compositionally biased stretch (polar residues) spans 140–153 (NAAPGAENVTNNEG). Disordered stretches follow at residues 140 to 172 (NAAP…PTNS), 299 to 324 (VPAS…MQQP), and 346 to 566 (SMQH…QIKS). Ser-154 is modified (phosphoserine). 2 stretches are compositionally biased toward pro residues: residues 367–390 (APPP…PGMP) and 399–461 (LPQP…PPVQ). A compositionally biased stretch (low complexity) spans 462–471 (PTFQPTFQPQ). Over residues 493-503 (EVKRHVPESRK) the composition is skewed to basic and acidic residues. The segment covering 504–541 (SRSRSPKRRRSRSGSRSRRSRHRRSRSRSRDRRRHSPR) has biased composition (basic residues). Residues 543–558 (RSQERRDREKERERRQ) are compositionally biased toward basic and acidic residues. The 75-residue stretch at 574 to 648 (TTLWVGQLDK…KSIKIAWALN (75 aa)) folds into the RRM domain. 3 disordered regions span residues 696-724 (WKGI…VSPI), 834-875 (VSGA…SLLG), and 927-1200 (PPHM…EAPR). Position 722 is a phosphoserine (Ser-722). 2 stretches are compositionally biased toward pro residues: residues 856–868 (PAAP…PPVT) and 927–958 (PPHM…PPHG). The span at 965-978 (GMPGLGGPGPGPGG) shows a compositional bias: gly residues. Residues 986-1036 (QQQPQQQQQQQQQQQQQQQQQQQQPPPQQSQTQQQPAPSQQPAPAQQQPQQ) are compositionally biased toward low complexity. A Phosphoserine modification is found at Ser-1058. Residues 1063–1139 (VENDRERYGS…RGKEKHEVAD (77 aa)) are compositionally biased toward basic and acidic residues. Positions 1153–1162 (QVGNTDTVSE) are enriched in polar residues. The residue at position 1178 (Ser-1178) is a Phosphoserine.

As to quaternary structure, interacts with POLR2A; via C-terminal heptapeptide repeat domain (CTD) phosphorylated at 'Ser-2' and 'Ser-5'.

Its subcellular location is the nucleus. Functionally, anti-terminator protein required to prevent early mRNA termination during transcription. Together with SCAF8, acts by suppressing the use of early, alternative poly(A) sites, thereby preventing the accumulation of non-functional truncated proteins. Mechanistically, associates with the phosphorylated C-terminal heptapeptide repeat domain (CTD) of the largest RNA polymerase II subunit (POLR2A), and subsequently binds nascent RNA upstream of early polyadenylation sites to prevent premature mRNA transcript cleavage and polyadenylation. Independently of SCAF8, also acts as a suppressor of transcriptional readthrough. This chain is SR-related and CTD-associated factor 4, found in Rattus norvegicus (Rat).